A 448-amino-acid chain; its full sequence is Glutamyl-tRNA reductase (448 aa).

Substrate is bound by residues 49–52, serine 109, 114–116, and glutamine 120; these read TCNR and ETQ. Cysteine 50 serves as the catalytic Nucleophile. 189–194 lines the NADP(+) pocket; the sequence is GAGEMG.

It belongs to the glutamyl-tRNA reductase family. Homodimer.

It carries out the reaction (S)-4-amino-5-oxopentanoate + tRNA(Glu) + NADP(+) = L-glutamyl-tRNA(Glu) + NADPH + H(+). It participates in porphyrin-containing compound metabolism; protoporphyrin-IX biosynthesis; 5-aminolevulinate from L-glutamyl-tRNA(Glu): step 1/2. Its function is as follows. Catalyzes the NADPH-dependent reduction of glutamyl-tRNA(Glu) to glutamate 1-semialdehyde (GSA). This is Glutamyl-tRNA reductase from Staphylococcus epidermidis (strain ATCC 12228 / FDA PCI 1200).